The chain runs to 220 residues: Deoxyribose-phosphate aldolase 1 (220 aa).

The Proton donor/acceptor role is filled by Asp89. The Schiff-base intermediate with acetaldehyde role is filled by Lys151. Lys180 serves as the catalytic Proton donor/acceptor.

It belongs to the DeoC/FbaB aldolase family. DeoC type 1 subfamily.

It localises to the cytoplasm. The catalysed reaction is 2-deoxy-D-ribose 5-phosphate = D-glyceraldehyde 3-phosphate + acetaldehyde. The protein operates within carbohydrate degradation; 2-deoxy-D-ribose 1-phosphate degradation; D-glyceraldehyde 3-phosphate and acetaldehyde from 2-deoxy-alpha-D-ribose 1-phosphate: step 2/2. Catalyzes a reversible aldol reaction between acetaldehyde and D-glyceraldehyde 3-phosphate to generate 2-deoxy-D-ribose 5-phosphate. This Staphylococcus aureus (strain COL) protein is Deoxyribose-phosphate aldolase 1.